The primary structure comprises 1778 residues: Ankyrin repeat domain-containing protein 36C (1778 aa).

5 ANK repeats span residues 64-93 (KERT…ELNL), 97-126 (EDRT…DPNI), 130-159 (FGRT…NIEE), 163-192 (DEYP…NINA), and 196-225 (LGRS…DVFS). 5 disordered regions span residues 260–365 (LSIN…DEQK), 501–526 (ALPA…VKDS), 538–653 (DSLT…QKQS), 671–1027 (RITG…QKQL), and 1051–1072 (IRGT…EKDS). Polar residues-rich tracts occupy residues 261–272 (SINSNPVSSQKQ) and 297–306 (KSGTVSSQKQ). A compositionally biased stretch (low complexity) spans 539-555 (SLTSSEESSERPPLSTL). Basic and acidic residues-rich tracts occupy residues 585 to 596 (PAEKATSDDKDS) and 619 to 630 (PAEKATSDEKDS). 2 stretches are compositionally biased toward polar residues: residues 631-653 (VSNI…QKQS) and 679-691 (GTVS…PSKA). A compositionally biased stretch (basic and acidic residues) spans 794–813 (TSDEKDSFSNITREKKDGEI). Residue S829 is modified to Phosphoserine. Basic and acidic residues-rich tracts occupy residues 840–849 (RGKEDGEKTR) and 862–881 (TSDE…DGET). Position 897 is a phosphoserine (S897). A compositionally biased stretch (basic and acidic residues) spans 907-917 (AREKKDGEKSR). The span at 942 to 955 (RGKKHGEKTRRVSS) shows a compositional bias: basic residues. Polar residues-rich tracts occupy residues 983 to 992 (ISGTVSSQKQ) and 1005 to 1026 (VSNI…SQKQ). Coiled-coil stretches lie at residues 1157-1187 (EQDL…QIHS), 1247-1333 (ELKD…YRIE), 1362-1480 (SETD…DHDQ), and 1544-1768 (VFEH…ILQH).

The protein belongs to the ANKRD36 family.

The chain is Ankyrin repeat domain-containing protein 36C (ANKRD36C) from Homo sapiens (Human).